The sequence spans 549 residues: MLCEIECRALSTAHTRLIHDFEPRDALTYLEGKNIFTEDHSELISKMSTRLERIANFLRIYRRQASELGPLIDFFNYNNQSHLADFLEDYIDFAINEPDLLRPVVIAPQFSRQMLDRKLLLGNVPKQMTCYIREYHVDRVIKKLDEMCDLDSFFLFLHGRAGSGKSVIASQALSKSDQLIGINYDSIVWLKDSGTAPKSTFDLFTDILLMLKSEDDLLNFPSVEHVTSVVLKRMICNALIDRPNTLFVFDDVVQEETIRWAQELRLRCLVTTRDVEISNAASQTCEFIEVTSLEIDECYDFLEAYGMPMPVGEKEEDVLNKTIELSSGNPATLMMFFKSCEPKTFEKMAQLNNKLESRGLVGVECITPYSYKSLAMALQRCVEVLSDEDRSALAFAVVMPPGVDIPVKLWSCVIPVDICSNEEEQLDDEVADRLKRLSKRGALLSGKRMPVLTFKIDHIIHMFLKHVVDAQTIANGISILEQRLLEIGNNNVSVPERHIPSHFQKFRRSSASEMYPKTTEETVIRPEDFPKFMQLHQKFYDSLKNFACC.

Residues 1 to 91 (MLCEIECRAL…HLADFLEDYI (91 aa)) form the CARD domain. Tyr-131, Gly-162, Gly-164, Lys-165, Ser-166, Val-167, Arg-273, Thr-367, and Tyr-369 together coordinate ATP. An NB-ARC domain is found at 133 to 417 (REYHVDRVIK…KLWSCVIPVD (285 aa)). Ser-166 provides a ligand contact to Mg(2+).

Associates as an asymmetric homodimer with ced-9. Only one ced-4 molecule within the dimer interacts directly with ced-9. Upon release from ced-9, forms a multimer, known as the apoptosome, and interacts with ced-3; the interaction results in ced-3 autoproteolytic cleavage and activation. Multiple oligomeric states of the apoptosome are observed including hexamers, heptamers and octamers. The hexamers likely represent a pre-mature state of the apoptosome and may contribute to the regulation of ced-3 activation. The apoptosome multimer also interacts with two processed ced-3 to form a stable holoenzyme. Interacts with sex-determining protein fem-1. May form a complex composed of ced-3, ced-4 and mac-1 or of ced-9, ced-4 and mac-1. Within the complex, interacts with mac-1.

Its subcellular location is the mitochondrion. It localises to the cytoplasm. The protein resides in the perinuclear region. Component of the egl-1, ced-9, ced-4 and ced-3 apoptotic signaling cascade required for the initiation of programmed cell death in cells fated to die during embryonic and postembryonic development. During oogenesis, required for germline apoptosis downstream of ced-9 and upstream of ced-3 but independently of egl-1. May regulate germline apoptosis in response to DNA damage, probably downstream of let-60/ras and mpk-1 pathway. Regulates CEP neuron apoptosis in response to high Al(3+) levels. During male tail morphogenesis, promotes apoptosis of the tail-spike cell upstream of ced-3 but independently of egl-1 and ced-9. May play a role in sex-specific cell apoptosis, probably by promoting ced-3-mediated cleavage of sex-determining protein fem-1. During larval development, required for the elimination of transient presynaptic components downstream of egl-1 and ced-9 and upstream of ced-3 apoptotic pathway. Downstream of calreticulin crt-1 and upstream of ced-3 and independently of egl-1 and ced-9, plays a role in the initial steps of axonal regrowth following axotomy. Together with ain-1, a component of the miRNA-induced-silencing complex (miRISC), and probably upstream of ced-3, regulates temporal cell fate patterning during larval development. May play a role in resistance to S.typhimurium-mediated infection. Functionally, plays a major role in programmed cell death. egl-1 binds to and directly inhibits the activity of ced-9, releasing the cell death activator ced-4 from a ced-9/ced-4-containing protein complex and allowing ced-4 to induce caspase ced-3 autoproteolytic cleavage and activation. Also forms a holoenzyme with processed ced-3 enhancing ced-3 activity. Its function is as follows. Prevents programmed cell death. The chain is Cell death protein 4 (ced-4) from Caenorhabditis elegans.